The sequence spans 168 residues: Transcriptional regulator MraZ (168 aa).

2 SpoVT-AbrB domains span residues 8–51 and 90–140; these read EYNQ…GGDR and ALNM…KADT.

It belongs to the MraZ family. In terms of assembly, forms oligomers.

Its subcellular location is the cytoplasm. It is found in the nucleoid. This Cereibacter sphaeroides (strain ATCC 17025 / ATH 2.4.3) (Rhodobacter sphaeroides) protein is Transcriptional regulator MraZ.